The sequence spans 111 residues: Disintegrin piscivostatin-alpha (111 aa).

A signal peptide spans 1–20 (MIQVLLVTICLAVFPYQGSS). A propeptide spanning residues 21-44 (IILESGNVNDYEVVYPRKITPLPK) is cleaved from the precursor. The region spanning 45–111 (GAVQPKNPCC…GDCPRKHFYA (67 aa)) is the Disintegrin domain. 4 disulfides stabilise this stretch: Cys-53-Cys-76, Cys-67-Cys-73, Cys-72-Cys-97, and Cys-85-Cys-104. Residues 89-91 (RGD) carry the Cell attachment site motif. Positions 110-111 (YA) are excised as a propeptide.

This sequence belongs to the disintegrin family. Dimeric disintegrin subfamily. As to quaternary structure, heterodimer with piscivostatin-beta; disulfide-linked. As to expression, expressed by the venom gland.

The protein localises to the secreted. Functionally, inhibits fibrinogen interaction with platelets. Acts by binding to alpha-IIb/beta-3 (ITGA2B/ITGB3) on the platelet surface and inhibits both ADP-induced platelet aggregation and platelet aggregate dissociation in human platelet-rich plasma. The polypeptide is Disintegrin piscivostatin-alpha (Agkistrodon piscivorus piscivorus (Eastern cottonmouth)).